The chain runs to 146 residues: Large ribosomal subunit protein bL9 (146 aa).

Belongs to the bacterial ribosomal protein bL9 family.

Functionally, binds to the 23S rRNA. This chain is Large ribosomal subunit protein bL9, found in Deinococcus deserti (strain DSM 17065 / CIP 109153 / LMG 22923 / VCD115).